The sequence spans 386 residues: Succinate--CoA ligase [ADP-forming] subunit beta (386 aa).

ATP is bound by residues K46, 53–55 (GRG), E99, Q102, and E107. Positions 199 and 213 each coordinate Mg(2+). Residues N264 and 321 to 323 (GIV) each bind substrate.

This sequence belongs to the succinate/malate CoA ligase beta subunit family. As to quaternary structure, heterotetramer of two alpha and two beta subunits. Mg(2+) is required as a cofactor.

It carries out the reaction succinate + ATP + CoA = succinyl-CoA + ADP + phosphate. It catalyses the reaction GTP + succinate + CoA = succinyl-CoA + GDP + phosphate. The protein operates within carbohydrate metabolism; tricarboxylic acid cycle; succinate from succinyl-CoA (ligase route): step 1/1. Functionally, succinyl-CoA synthetase functions in the citric acid cycle (TCA), coupling the hydrolysis of succinyl-CoA to the synthesis of either ATP or GTP and thus represents the only step of substrate-level phosphorylation in the TCA. The beta subunit provides nucleotide specificity of the enzyme and binds the substrate succinate, while the binding sites for coenzyme A and phosphate are found in the alpha subunit. The chain is Succinate--CoA ligase [ADP-forming] subunit beta from Ruthia magnifica subsp. Calyptogena magnifica.